Consider the following 440-residue polypeptide: (S)-N-methylcoclaurine 3'-hydroxylase-like protein (440 aa).

A helical; Signal-anchor for type II membrane protein membrane pass occupies residues 2–21 (EIVTVALIAIVFTTFLYLIV). Position 430 (cysteine 430) interacts with heme.

It belongs to the cytochrome P450 family. Requires heme as cofactor.

Its subcellular location is the membrane. Its function is as follows. Involved in the biosynthesis of benzylisoquinoline alkaloids. Probably involved in papaverine biosynthesis since its transcripts are abundant only in cultivars with substantial papaverine accumulation. May catalyze the 3'-hydroxylation of (S)-coclaurine. This is (S)-N-methylcoclaurine 3'-hydroxylase-like protein from Papaver somniferum (Opium poppy).